The following is a 116-amino-acid chain: Iron-sulfur cluster insertion protein ErpA (116 aa).

Residues Cys44, Cys108, and Cys110 each contribute to the iron-sulfur cluster site.

It belongs to the HesB/IscA family. As to quaternary structure, homodimer. Iron-sulfur cluster is required as a cofactor.

Functionally, required for insertion of 4Fe-4S clusters for at least IspG. This Shewanella putrefaciens (strain CN-32 / ATCC BAA-453) protein is Iron-sulfur cluster insertion protein ErpA.